The sequence spans 186 residues: Elongation factor P (186 aa).

It belongs to the elongation factor P family.

It localises to the cytoplasm. The protein operates within protein biosynthesis; polypeptide chain elongation. Involved in peptide bond synthesis. Stimulates efficient translation and peptide-bond synthesis on native or reconstituted 70S ribosomes in vitro. Probably functions indirectly by altering the affinity of the ribosome for aminoacyl-tRNA, thus increasing their reactivity as acceptors for peptidyl transferase. The protein is Elongation factor P of Enterococcus faecalis (strain ATCC 700802 / V583).